Reading from the N-terminus, the 484-residue chain is Glutamyl-tRNA(Gln) amidotransferase subunit B, mitochondrial (484 aa).

This sequence belongs to the GatB/GatE family. GatB subfamily. Subunit of the heterotrimeric GatFAB amidotransferase (AdT) complex, composed of A, B and F subunits.

The protein resides in the mitochondrion. It carries out the reaction L-glutamyl-tRNA(Gln) + L-glutamine + ATP + H2O = L-glutaminyl-tRNA(Gln) + L-glutamate + ADP + phosphate + H(+). Functionally, allows the formation of correctly charged Gln-tRNA(Gln) through the transamidation of misacylated Glu-tRNA(Gln) in the mitochondria. The reaction takes place in the presence of glutamine and ATP through an activated gamma-phospho-Glu-tRNA(Gln). The polypeptide is Glutamyl-tRNA(Gln) amidotransferase subunit B, mitochondrial (Candida tropicalis (strain ATCC MYA-3404 / T1) (Yeast)).